A 265-amino-acid polypeptide reads, in one-letter code: Flap endonuclease Xni (265 aa).

Aspartate 111 lines the Mg(2+) pocket. Positions 167–260 (VVPAQLVDFW…NLREIRYPPA (94 aa)) constitute a 5'-3' exonuclease domain. 3 residues coordinate K(+): leucine 178, valine 189, and isoleucine 192. Residues 191–196 (GIGPKT) form an interaction with DNA region.

Belongs to the Xni family. Mg(2+) is required as a cofactor. It depends on K(+) as a cofactor.

In terms of biological role, has flap endonuclease activity. During DNA replication, flap endonucleases cleave the 5'-overhanging flap structure that is generated by displacement synthesis when DNA polymerase encounters the 5'-end of a downstream Okazaki fragment. This is Flap endonuclease Xni from Aeromonas salmonicida (strain A449).